Consider the following 738-residue polypeptide: Envelope glycoprotein gp160 (738 aa).

The first 21 residues, 1-21 (MCGKSLLCVASLLASAYLVYC), serve as a signal peptide directing secretion. Residues 22-670 (TQYVTVFYGV…LTSWIKYIQY (649 aa)) are Extracellular-facing. Asparagine 36 carries an N-linked (GlcNAc...) asparagine; by host glycan. A disulfide bridge connects residues cysteine 43 and cysteine 56. Residues asparagine 69, asparagine 113, asparagine 117, asparagine 118, asparagine 132, asparagine 141, asparagine 169, asparagine 182, asparagine 197, asparagine 229, asparagine 232, asparagine 263, asparagine 269, asparagine 280, asparagine 291, asparagine 301, asparagine 356, asparagine 362, asparagine 389, asparagine 402, asparagine 439, asparagine 454, and asparagine 457 are each glycosylated (N-linked (GlcNAc...) asparagine; by host). Disulfide bonds link cysteine 100/cysteine 205, cysteine 107/cysteine 196, cysteine 112/cysteine 153, cysteine 218/cysteine 248, and cysteine 228/cysteine 240. The segment at 112-152 (CNSTTNNTTTTGSTTGMSEINETSPSYSDNCTGLGKEEIVN) is V1. The interval 153–196 (CQFYMTGLERDKKKQYNETWYSKDVVCESNNTKDGKNRCYMNHC) is V2. The tract at residues 296–328 (CKRPGNKTVVPITLMSGLVFHSQPINTRPRQAW) is V3. A disulfide bridge links cysteine 296 with cysteine 329. Intrachain disulfides connect cysteine 381-cysteine 438 and cysteine 388-cysteine 411. The V4 stretch occupies residues 388-411 (CNMTWFLNWVENRPNQTQHNYAPC). The V5 stretch occupies residues 454–460 (NQTNITF). The interval 503–523 (GVFVLGFLGFLATAGSAMGAA) is fusion peptide. Positions 566-582 (LQARVTAIEKYLKDQAQ) are immunosuppression. Residues asparagine 602, asparagine 611, and asparagine 627 are each glycosylated (N-linked (GlcNAc...) asparagine; by host). A coiled-coil region spans residues 615–636 (QEWEKQVRYLEANISQSLEQAQ). Positions 648–669 (KLNSWDVFGNWFDLTSWIKYIQ) are MPER; binding to GalCer. A helical membrane pass occupies residues 671–691 (GVYIVVGVIVLRIAIYIVQLL). Over 692 to 738 (SRLRKGYRPVFSSPPGYLQQIHIHTDRGQPANEGTEEDDRDDDGYDL) the chain is Cytoplasmic. The YXXV motif; contains endocytosis signal signature appears at 698–701 (YRPV). The interval 716 to 738 (TDRGQPANEGTEEDDRDDDGYDL) is disordered. Acidic residues predominate over residues 725–738 (GTEEDDRDDDGYDL).

In terms of assembly, the mature envelope protein (Env) consists of a homotrimer of non-covalently associated gp120-gp41 heterodimers. The resulting complex protrudes from the virus surface as a spike. There seems to be as few as 10 spikes on the average virion. Interacts with human CD4, CCR5 and CXCR4, to form a P4HB/PDI-CD4-CXCR4-gp120 complex. Gp120 also interacts with the C-type lectins CD209/DC-SIGN and CLEC4M/DC-SIGNR (collectively referred to as DC-SIGN(R)). Gp120 and gp41 interact with GalCer. The mature envelope protein (Env) consists of a homotrimer of non-covalently associated gp120-gp41 heterodimers. The resulting complex protrudes from the virus surface as a spike. There seems to be as few as 10 spikes on the average virion. Specific enzymatic cleavages in vivo yield mature proteins. Envelope glycoproteins are synthesized as an inactive precursor that is heavily N-glycosylated and processed likely by host cell furin in the Golgi to yield the mature SU and TM proteins. The cleavage site between SU and TM requires the minimal sequence [KR]-X-[KR]-R. Post-translationally, palmitoylation of the transmembrane protein and of Env polyprotein (prior to its proteolytic cleavage) is essential for their association with host cell membrane lipid rafts. Palmitoylation is therefore required for envelope trafficking to classical lipid rafts, but not for viral replication.

Its subcellular location is the virion membrane. It is found in the host cell membrane. The protein localises to the host endosome membrane. The surface protein gp120 (SU) attaches the virus to the host lymphoid cell by binding to the primary receptor CD4. This interaction induces a structural rearrangement creating a high affinity binding site for a chemokine coreceptor like CXCR4 and/or CCR5. This peculiar 2 stage receptor-interaction strategy allows gp120 to maintain the highly conserved coreceptor-binding site in a cryptic conformation, protected from neutralizing antibodies. Since CD4 also displays a binding site for the disulfide-isomerase P4HB/PDI, a P4HB/PDI-CD4-CXCR4-gp120 complex may form. In that complex, P4HB/PDI could reach and reduce gp120 disulfide bonds, causing major conformational changes in gp120. TXN, another PDI family member could also be involved in disulfide rearrangements in Env during fusion. These changes are transmitted to the transmembrane protein gp41 and are thought to activate its fusogenic potential by unmasking its fusion peptide. Functionally, the surface protein gp120 is a ligand for CD209/DC-SIGN and CLEC4M/DC-SIGNR, which are respectively found on dendritic cells (DCs), and on endothelial cells of liver sinusoids and lymph node sinuses. These interactions allow capture of viral particles at mucosal surfaces by these cells and subsequent transmission to permissive cells. DCs are professional antigen presenting cells, critical for host immunity by inducing specific immune responses against a broad variety of pathogens. They act as sentinels in various tissues where they take up antigen, process it, and present it to T-cells following migration to lymphoid organs. HIV subverts the migration properties of dendritic cells to gain access to CD4+ T-cells in lymph nodes. Virus transmission to permissive T-cells occurs either in trans (without DCs infection, through viral capture and transmission), or in cis (following DCs productive infection, through the usual CD4-gp120 interaction), thereby inducing a robust infection. In trans infection, bound virions remain infectious over days and it is proposed that they are not degraded, but protected in non-lysosomal acidic organelles within the DCs close to the cell membrane thus contributing to the viral infectious potential during DCs' migration from the periphery to the lymphoid tissues. On arrival at lymphoid tissues, intact virions recycle back to DCs' cell surface allowing virus transmission to CD4+ T-cells. Virion capture also seems to lead to MHC-II-restricted viral antigen presentation, and probably to the activation of HIV-specific CD4+ cells. In terms of biological role, the transmembrane protein gp41 (TM) acts as a class I viral fusion protein. Under the current model, the protein has at least 3 conformational states: pre-fusion native state, pre-hairpin intermediate state, and post-fusion hairpin state. During fusion of viral and target intracellular membranes, the coiled coil regions (heptad repeats) assume a trimer-of-hairpins structure, positioning the fusion peptide in close proximity to the C-terminal region of the ectodomain. The formation of this structure appears to drive apposition and subsequent fusion of viral and target cell membranes. Complete fusion occurs in host cell endosomes and is dynamin-dependent, however some lipid transfer might occur at the plasma membrane. The virus undergoes clathrin-dependent internalization long before endosomal fusion, thus minimizing the surface exposure of conserved viral epitopes during fusion and reducing the efficacy of inhibitors targeting these epitopes. Membranes fusion leads to delivery of the nucleocapsid into the cytoplasm. Its function is as follows. The envelope glycoprotein gp160 precursor down-modulates cell surface CD4 antigen by interacting with it in the endoplasmic reticulum and blocking its transport to the cell surface. The gp120-gp41 heterodimer seems to contribute to T-cell depletion during HIV-1 infection. The envelope glycoproteins expressed on the surface of infected cells induce apoptosis through an interaction with uninfected cells expressing the receptor (CD4) and the coreceptors CXCR4 or CCR5. This type of bystander killing may be obtained by at least three distinct mechanisms. First, the interaction between the 2 cells can induce cellular fusion followed by nuclear fusion within the syncytium. Syncytia are condemned to die from apoptosis. Second, the 2 interacting cells may not fuse entirely and simply exchange plasma membrane lipids, after a sort of hemifusion process, followed by rapid death. Third, it is possible that virus-infected cells, on the point of undergoing apoptosis, fuse with CD4-expressing cells, in which case apoptosis is rapidly transmitted from one cell to the other and thus occurs in a sort of contagious fashion. Functionally, the gp120-gp41 heterodimer allows rapid transcytosis of the virus through CD4 negative cells such as simple epithelial monolayers of the intestinal, rectal and endocervical epithelial barriers. Both gp120 and gp41 specifically recognize glycosphingolipids galactosyl-ceramide (GalCer) or 3' sulfo-galactosyl-ceramide (GalS) present in the lipid rafts structures of epithelial cells. Binding to these alternative receptors allows the rapid transcytosis of the virus through the epithelial cells. This transcytotic vesicle-mediated transport of virions from the apical side to the basolateral side of the epithelial cells does not involve infection of the cells themselves. The protein is Envelope glycoprotein gp160 (env) of Human immunodeficiency virus type 2 subtype A (isolate Ghana-1) (HIV-2).